The following is a 436-amino-acid chain: Transcription termination factor Rho (436 aa).

The Rho RNA-BD domain occupies 65–140 (LVFVKGVLEI…IRMESVNGLP (76 aa)). Residues 185–190 (GKGQRG), 197–202 (KAGKTV), and Arg228 contribute to the ATP site.

It belongs to the Rho family. In terms of assembly, homohexamer. The homohexamer assembles into an open ring structure.

Facilitates transcription termination by a mechanism that involves Rho binding to the nascent RNA, activation of Rho's RNA-dependent ATPase activity, and release of the mRNA from the DNA template. The sequence is that of Transcription termination factor Rho from Aquifex aeolicus (strain VF5).